The following is a 161-amino-acid chain: Protein-export protein SecB (161 aa).

This sequence belongs to the SecB family. As to quaternary structure, homotetramer, a dimer of dimers. One homotetramer interacts with 1 SecA dimer.

It is found in the cytoplasm. In terms of biological role, one of the proteins required for the normal export of preproteins out of the cell cytoplasm. It is a molecular chaperone that binds to a subset of precursor proteins, maintaining them in a translocation-competent state. It also specifically binds to its receptor SecA. The chain is Protein-export protein SecB from Afipia carboxidovorans (strain ATCC 49405 / DSM 1227 / KCTC 32145 / OM5) (Oligotropha carboxidovorans).